The primary structure comprises 499 residues: Probable cytosol aminopeptidase (499 aa).

2 residues coordinate Mn(2+): Lys-269 and Asp-274. Residue Lys-281 is part of the active site. Mn(2+) is bound by residues Asp-292, Asp-351, and Glu-353. Arg-355 is an active-site residue.

Belongs to the peptidase M17 family. Mn(2+) is required as a cofactor.

The protein localises to the cytoplasm. The enzyme catalyses Release of an N-terminal amino acid, Xaa-|-Yaa-, in which Xaa is preferably Leu, but may be other amino acids including Pro although not Arg or Lys, and Yaa may be Pro. Amino acid amides and methyl esters are also readily hydrolyzed, but rates on arylamides are exceedingly low.. It carries out the reaction Release of an N-terminal amino acid, preferentially leucine, but not glutamic or aspartic acids.. Its function is as follows. Presumably involved in the processing and regular turnover of intracellular proteins. Catalyzes the removal of unsubstituted N-terminal amino acids from various peptides. The protein is Probable cytosol aminopeptidase of Actinobacillus pleuropneumoniae serotype 5b (strain L20).